We begin with the raw amino-acid sequence, 2137 residues long: Pecanex-like protein 2 (2137 aa).

The next 2 helical transmembrane spans lie at 34–54 (CHLY…LAFP) and 57–77 (AIIV…IKLV). 4 disordered regions span residues 92–163 (QQKP…LELS), 225–251 (NGKG…VDKG), 402–530 (EKTS…HARV), and 545–572 (SAEI…QMPN). The span at 96–114 (SRKEEKPNKDKEAKGEHIT) shows a compositional bias: basic and acidic residues. The span at 116–125 (HRNPSNNRQI) shows a compositional bias: polar residues. Residue N136 is glycosylated (N-linked (GlcNAc...) asparagine). Positions 146–156 (SRGQSITSHHS) are enriched in polar residues. The N-linked (GlcNAc...) asparagine glycan is linked to N449. Basic and acidic residues predominate over residues 479–490 (IKDHSSSSREPW). Polar residues predominate over residues 510–520 (GQTNLDPSSCK). N-linked (GlcNAc...) asparagine glycans are attached at residues N550, N572, N587, N598, and N613. Residues 593-602 (ASSQLNGSAE) show a composition bias toward polar residues. A disordered region spans residues 593 to 612 (ASSQLNGSAEQNEESGLLRD). Disordered stretches follow at residues 621 to 655 (EILE…CTQP) and 740 to 763 (AREM…SGDP). Over residues 630-655 (GHSSKQGKPDLQSQDHTSTGPACTQP) the composition is skewed to polar residues. The span at 746-760 (SSSSTTTSESQDPSS) shows a compositional bias: low complexity. Transmembrane regions (helical) follow at residues 844-864 (LAIL…SQGF), 868-888 (MWVL…LKSV), 901-921 (QIIT…ILLL), 952-972 (YLIV…FPQI), 983-1003 (IDML…VYSV), 1029-1049 (HIPA…YHLS), 1099-1119 (LIVC…TVFL), 1124-1144 (FLSI…HYVL), 1193-1213 (YILY…LISN), 1237-1257 (SFCN…FFHF), 1265-1285 (SFLL…DLLH), 1302-1322 (GSSF…MLFF), and 1324-1344 (TIAT…VIFI). N-linked (GlcNAc...) asparagine glycosylation is found at N1412, N1553, and N1818. The segment at 1876–1958 (RQHSGGNIED…RPPMLSSSGP (83 aa)) is disordered. Composition is skewed to polar residues over residues 1901–1910 (SGGSQESSAE), 1920–1929 (GVSSCEGTQR), and 1937–1958 (SQSV…SSGP). An N-linked (GlcNAc...) asparagine glycan is attached at N2054.

It belongs to the pecanex family.

It localises to the membrane. May play a role in tumorigenesis of colorectal carcinomas with high microsatellite instability (MSI-H). This is Pecanex-like protein 2 from Homo sapiens (Human).